A 309-amino-acid polypeptide reads, in one-letter code: Taste receptor type 2 member 124 (309 aa).

Over 1-7 (MVSVLHS) the chain is Extracellular. Residues 8–28 (ISTIIIIAEFVWGNLSNGLIV) form a helical membrane-spanning segment. Topologically, residues 29–46 (LKNCLDWINIKELSTLDQ) are cytoplasmic. The chain crosses the membrane as a helical span at residues 47 to 67 (ILILLAISRISLIWETLLMWV). Residues 68–81 (KDKLISSITIEELK) lie on the Extracellular side of the membrane. The chain crosses the membrane as a helical span at residues 82–102 (MIMFSFMLSSHFSLWLATALS). Topologically, residues 103 to 127 (TFYLFRIANCSWQIFLYLKWRLKHL) are cytoplasmic. A helical membrane pass occupies residues 128–148 (IVQMLLGSVMFLIANIIQITI). Topologically, residues 149-182 (TLEKRFYQYKGNTSVNSIQNEFALLIEMMLFNMT) are extracellular. N-linked (GlcNAc...) asparagine glycosylation is found at asparagine 160 and asparagine 180. The helical transmembrane segment at 183-203 (IFSVIPFLLALISFFLLIFSL) threads the bilayer. The Cytoplasmic portion of the chain corresponds to 204–227 (WKHLQRMQLNSREDRDPSTKAHRN). Residues 228 to 248 (ALGIMVSFLLLYTMYVLSLLI) form a helical membrane-spanning segment. Residues 249–261 (SWIAQKNQSELVH) lie on the Extracellular side of the membrane. Asparagine 255 carries an N-linked (GlcNAc...) asparagine glycan. The chain crosses the membrane as a helical span at residues 262–282 (IICMITSLLNPSVHSSILILG). The Cytoplasmic segment spans residues 283-309 (NFKLKQSSLCILRHLGCRLKSQNTPTT).

This sequence belongs to the G-protein coupled receptor T2R family.

Its subcellular location is the membrane. In terms of biological role, putative taste receptor which may play a role in the perception of bitterness. This Rattus norvegicus (Rat) protein is Taste receptor type 2 member 124.